The sequence spans 128 residues: uncharacterized protein (128 aa).

To M.jannaschii MJ0766.

This is an uncharacterized protein from Methanocaldococcus jannaschii (strain ATCC 43067 / DSM 2661 / JAL-1 / JCM 10045 / NBRC 100440) (Methanococcus jannaschii).